We begin with the raw amino-acid sequence, 232 residues long: Octanoyltransferase (232 aa).

One can recognise a BPL/LPL catalytic domain in the interval glutamate 44–leucine 219. Substrate is bound by residues arginine 83–histidine 90, alanine 150–glycine 152, and glycine 163–serine 165. Residue cysteine 181 is the Acyl-thioester intermediate of the active site.

Belongs to the LipB family.

It is found in the cytoplasm. The enzyme catalyses octanoyl-[ACP] + L-lysyl-[protein] = N(6)-octanoyl-L-lysyl-[protein] + holo-[ACP] + H(+). Its pathway is protein modification; protein lipoylation via endogenous pathway; protein N(6)-(lipoyl)lysine from octanoyl-[acyl-carrier-protein]: step 1/2. Its function is as follows. Catalyzes the transfer of endogenously produced octanoic acid from octanoyl-acyl-carrier-protein onto the lipoyl domains of lipoate-dependent enzymes. Lipoyl-ACP can also act as a substrate although octanoyl-ACP is likely to be the physiological substrate. In Xanthomonas campestris pv. campestris (strain 8004), this protein is Octanoyltransferase.